A 666-amino-acid chain; its full sequence is Endogenous retrovirus group K member 6 Gag polyprotein (666 aa).

Glycine 2 is lipidated: N-myristoyl glycine. The tract at residues 165 to 264 (GKGPELVGPS…APPSRQGSKL (100 aa)) is disordered. Pro residues predominate over residues 232–247 (GMPPAPQGRAPYPQPP). CCHC-type zinc fingers lie at residues 544 to 561 (RKCY…NCPV) and 580 to 597 (DLCP…QCRS). A disordered region spans residues 598–642 (KFDKNGQPLSGNEQRGQPQAPQQTGAFPIQPFVPQGFQGQQPPLS). Polar residues predominate over residues 604–622 (QPLSGNEQRGQPQAPQQTG). A compositionally biased stretch (low complexity) spans 624–640 (FPIQPFVPQGFQGQQPP).

Belongs to the beta type-B retroviral Gag protein family. HERV class-II K(HML-2) gag subfamily. Post-translationally, myristoylation is essential for retroviral assembly. Alteration of the glycine residue leads to a block in the budding of particles and an accumulation of Gag inside the cell. In terms of processing, specific enzymatic cleavages may yield mature proteins.

Its subcellular location is the cell membrane. Its function is as follows. The products of the Gag polyproteins of infectious retroviruses perform highly complex orchestrated tasks during the assembly, budding, maturation, and infection stages of the viral replication cycle. During viral assembly, the proteins form membrane associations and self-associations that ultimately result in budding of an immature virion from the infected cell. Gag precursors also function during viral assembly to selectively bind and package two plus strands of genomic RNA. Endogenous Gag proteins may have kept, lost or modified their original function during evolution. The protein is Endogenous retrovirus group K member 6 Gag polyprotein (ERVK-6) of Homo sapiens (Human).